Consider the following 134-residue polypeptide: Profilin-2 (134 aa).

A disulfide bridge links C13 with C118. The short motif at 84–100 (AVIRGKKGSGGITIKET) is the Involved in PIP2 interaction element. A Phosphothreonine modification is found at T114.

The protein belongs to the profilin family. In terms of assembly, occurs in many kinds of cells as a complex with monomeric actin in a 1:1 ratio. In terms of processing, phosphorylated by MAP kinases.

The protein localises to the cytoplasm. It localises to the cytoskeleton. Functionally, binds to actin and affects the structure of the cytoskeleton. At high concentrations, profilin prevents the polymerization of actin, whereas it enhances it at low concentrations. This Olea europaea (Common olive) protein is Profilin-2.